The sequence spans 364 residues: N-acetyl-gamma-glutamyl-phosphate reductase (364 aa).

Residue Cys-157 is part of the active site.

This sequence belongs to the NAGSA dehydrogenase family. Type 1 subfamily.

It is found in the cytoplasm. It catalyses the reaction N-acetyl-L-glutamate 5-semialdehyde + phosphate + NADP(+) = N-acetyl-L-glutamyl 5-phosphate + NADPH + H(+). It participates in amino-acid biosynthesis; L-arginine biosynthesis; N(2)-acetyl-L-ornithine from L-glutamate: step 3/4. Its function is as follows. Catalyzes the NADPH-dependent reduction of N-acetyl-5-glutamyl phosphate to yield N-acetyl-L-glutamate 5-semialdehyde. The polypeptide is N-acetyl-gamma-glutamyl-phosphate reductase (Bifidobacterium longum (strain NCC 2705)).